We begin with the raw amino-acid sequence, 440 residues long: Acyltransferase Pun1 (440 aa).

Catalysis depends on proton acceptor residues histidine 169 and aspartate 384.

This sequence belongs to the plant acyltransferase family.

It catalyses the reaction vanillylamine + (6E)-8-methylnon-6-enoyl-CoA = capsaicin + CoA + H(+). The catalysed reaction is (6E)-8-methylnon-6-enoyl-CoA + 4-hydroxy-3-methoxy-benzenemethanol = capsiate + CoA. In terms of biological role, involved in the biosynthesis of capsaicinoids and capsinoids natural products, pungent alkaloids synthesized from phenylpropanoid intermediates in the placental tissue of chili pepper fruit acting as repellant on herbivorous mammals and conferring spiciness to hot peppers. Catalyzes the biosynthesis of capsaicin, a pungent component, and of capsiate, a non-pungent component, from vanillylamine and vanillyl alcohol, respectively. Can transfer an acyl from 8-methylnon-6-enoyl-CoA to vanillylamine forming capsaicin and CoA. The polypeptide is Acyltransferase Pun1 (Capsicum frutescens (Cayenne pepper)).